Here is a 370-residue protein sequence, read N- to C-terminus: NAD-dependent histone deacetylase HST4 (370 aa).

The segment at 1–27 (MKQKFVLPITPPSTAEKKPQTENRCNE) is disordered. A compositionally biased stretch (basic and acidic residues) spans 15-27 (AEKKPQTENRCNE). One can recognise a Deacetylase sirtuin-type domain in the interval 75–370 (RHHMDRDAGF…GDCQHVTSLL (296 aa)). NAD(+) is bound by residues 100 to 119 (GAGI…EGIF) and 184 to 187 (QNID). H213 serves as the catalytic Proton acceptor. The Zn(2+) site is built by C221, C224, C251, and C254. NAD(+) contacts are provided by residues 310-312 (GTS), 340-342 (NTS), and C363.

This sequence belongs to the sirtuin family. Class I subfamily. Requires Zn(2+) as cofactor.

The protein localises to the nucleus. It catalyses the reaction N(6)-acetyl-L-lysyl-[protein] + NAD(+) + H2O = 2''-O-acetyl-ADP-D-ribose + nicotinamide + L-lysyl-[protein]. Functionally, NAD-dependent histone deacetylase, which contributes together with HST3 to histone H3 'Lys-56' deacetylation, regulation of telomeric silencing, proper cell cycle progression, DNA damage control, DNA recombination, and genomic maintenance. This is NAD-dependent histone deacetylase HST4 (HST4) from Saccharomyces cerevisiae (strain ATCC 204508 / S288c) (Baker's yeast).